Consider the following 1362-residue polypeptide: DNA-directed RNA polymerase subunit beta (1362 aa).

The protein belongs to the RNA polymerase beta chain family. In terms of assembly, the RNAP catalytic core consists of 2 alpha, 1 beta, 1 beta' and 1 omega subunit. When a sigma factor is associated with the core the holoenzyme is formed, which can initiate transcription.

The catalysed reaction is RNA(n) + a ribonucleoside 5'-triphosphate = RNA(n+1) + diphosphate. Functionally, DNA-dependent RNA polymerase catalyzes the transcription of DNA into RNA using the four ribonucleoside triphosphates as substrates. The chain is DNA-directed RNA polymerase subunit beta from Acinetobacter baylyi (strain ATCC 33305 / BD413 / ADP1).